Reading from the N-terminus, the 254-residue chain is DNA repair protein RecO (254 aa).

It belongs to the RecO family.

Functionally, involved in DNA repair and RecF pathway recombination. This is DNA repair protein RecO from Rhodopseudomonas palustris (strain BisB18).